We begin with the raw amino-acid sequence, 296 residues long: Phosphatidylglycerol--prolipoprotein diacylglyceryl transferase (296 aa).

Transmembrane regions (helical) follow at residues 17–37 (LAVR…IVVG), 59–79 (MMFY…VLFY), and 97–117 (GGMS…LFAW). Arg-142 contacts a 1,2-diacyl-sn-glycero-3-phospho-(1'-sn-glycerol). Transmembrane regions (helical) follow at residues 230 to 250 (MGAI…TVEF) and 265 to 285 (LSMG…MMIW).

The protein belongs to the Lgt family.

The protein localises to the cell inner membrane. It carries out the reaction L-cysteinyl-[prolipoprotein] + a 1,2-diacyl-sn-glycero-3-phospho-(1'-sn-glycerol) = an S-1,2-diacyl-sn-glyceryl-L-cysteinyl-[prolipoprotein] + sn-glycerol 1-phosphate + H(+). The protein operates within protein modification; lipoprotein biosynthesis (diacylglyceryl transfer). Its function is as follows. Catalyzes the transfer of the diacylglyceryl group from phosphatidylglycerol to the sulfhydryl group of the N-terminal cysteine of a prolipoprotein, the first step in the formation of mature lipoproteins. The chain is Phosphatidylglycerol--prolipoprotein diacylglyceryl transferase from Burkholderia thailandensis (strain ATCC 700388 / DSM 13276 / CCUG 48851 / CIP 106301 / E264).